The sequence spans 96 residues: Large ribosomal subunit protein bL27 (96 aa).

Positions 1–11 (MLKTLENLQLF) are excised as a propeptide. The tract at residues 13–36 (HKKGGGSTSNGRDSQAKRLGAKAA) is disordered.

The protein belongs to the bacterial ribosomal protein bL27 family. Post-translationally, the N-terminus is cleaved by ribosomal processing cysteine protease Prp.

The polypeptide is Large ribosomal subunit protein bL27 (Streptococcus thermophilus (strain CNRZ 1066)).